A 193-amino-acid polypeptide reads, in one-letter code: dTTP/UTP pyrophosphatase (193 aa).

Aspartate 71 serves as the catalytic Proton acceptor.

Belongs to the Maf family. YhdE subfamily. Requires a divalent metal cation as cofactor.

Its subcellular location is the cytoplasm. It catalyses the reaction dTTP + H2O = dTMP + diphosphate + H(+). The catalysed reaction is UTP + H2O = UMP + diphosphate + H(+). Nucleoside triphosphate pyrophosphatase that hydrolyzes dTTP and UTP. May have a dual role in cell division arrest and in preventing the incorporation of modified nucleotides into cellular nucleic acids. The sequence is that of dTTP/UTP pyrophosphatase from Dictyoglomus thermophilum (strain ATCC 35947 / DSM 3960 / H-6-12).